We begin with the raw amino-acid sequence, 600 residues long: Monooxygenase ptmN (600 aa).

Belongs to the FMO family. FAD is required as a cofactor.

It participates in secondary metabolite biosynthesis. In terms of biological role, monooxygenase; part of the gene cluster that mediates the biosynthesis of the indole diterpenes penitrems. The geranylgeranyl diphosphate (GGPP) synthase ptmG catalyzes the first step in penitrem biosynthesis via conversion of farnesyl pyrophosphate and isopentyl pyrophosphate into geranylgeranyl pyrophosphate (GGPP). Condensation of indole-3-glycerol phosphate with GGPP by the prenyl transferase ptmC then forms 3-geranylgeranylindole (3-GGI). Epoxidation by the FAD-dependent monooxygenase ptmM leads to a epoxidized-GGI that is substrate of the terpene cyclase ptmB for cyclization to yield paspaline. Paspaline is subsequently converted to 13-desoxypaxilline by the cytochrome P450 monooxygenase ptmP, the latter being then converted to paxilline by the cytochrome P450 monooxygenase ptmQ. Paxilline is converted to beta-paxitriol via C-10 ketoreduction by the short-chain dehydrogenase ptmH which can be monoprenylated at the C-20 by the indole diterpene prenyltransferase ptmD. A two-step elimination (acetylation and elimination) process performed by the O-acetyltransferase ptmV and ptmI leads to the production of the prenylated form of penijanthine. The FAD-linked oxidoreductase ptmO then converts the prenylated form of penijanthine into PC-M5 which is in turn transformed into PC-M4 by the aromatic dimethylallyltransferase ptmE. Five sequential oxidative transformations performed by the cytochrome P450 monooxygenases ptmK, ptmU, ptmL, ptmN and ptmJ yield the various penitrem compounds. PtmK, ptmU and ptmM are involved in the formation of the key bicyclic ring of penitrem C via the formation of the intermediates secopenitrem D and penitrem D. PtmL catalyzes the epoxidation of penitrem D and C to yield penitrem B and F, respectively. PtmJ catalyzes the last benzylic hydroxylation to convert penitrem B to prenitrem E and penitrem F to penitrem A. This chain is Monooxygenase ptmN, found in Penicillium ochrochloron.